The sequence spans 171 residues: MANPKVFFDLTIGGAPAGRVVMELFADTTPKTAENFRALCTGEKGVGKMGKPLHYKGSTFHRVIPGFMCQGGDFTAGNGTGGESIYGAKFNDENFVKKHTGPGILSMANAGPGTNGSQFFICTAKTEWLNGKHVVFGQVVEGMDVIKKAEAVGSSSGRCSKPVVIADCGQL.

One can recognise a PPIase cyclophilin-type domain in the interval 7 to 170; the sequence is FFDLTIGGAP…KPVVIADCGQ (164 aa).

The protein belongs to the cyclophilin-type PPIase family. Expressed in leaves, floral buds, growing shoots and stamens at anthesis.

It localises to the cytoplasm. The enzyme catalyses [protein]-peptidylproline (omega=180) = [protein]-peptidylproline (omega=0). Its activity is regulated as follows. Binds cyclosporin A (CsA). CsA mediates some of its effects via an inhibitory action on PPIase. Its function is as follows. PPIases accelerate the folding of proteins. It catalyzes the cis-trans isomerization of proline imidic peptide bonds in oligopeptides. The protein is Peptidyl-prolyl cis-trans isomerase of Solanum lycopersicum (Tomato).